A 130-amino-acid chain; its full sequence is Ribosome-binding factor A (130 aa).

It belongs to the RbfA family. As to quaternary structure, monomer. Binds 30S ribosomal subunits, but not 50S ribosomal subunits or 70S ribosomes.

Its subcellular location is the cytoplasm. One of several proteins that assist in the late maturation steps of the functional core of the 30S ribosomal subunit. Associates with free 30S ribosomal subunits (but not with 30S subunits that are part of 70S ribosomes or polysomes). Required for efficient processing of 16S rRNA. May interact with the 5'-terminal helix region of 16S rRNA. The polypeptide is Ribosome-binding factor A (Prochlorococcus marinus (strain MIT 9312)).